Consider the following 211-residue polypeptide: Ribosomal RNA small subunit methyltransferase G (211 aa).

Residues glycine 78, methionine 83, 129–130, and arginine 144 contribute to the S-adenosyl-L-methionine site; that span reads AE.

This sequence belongs to the methyltransferase superfamily. RNA methyltransferase RsmG family.

The protein resides in the cytoplasm. It carries out the reaction guanosine(527) in 16S rRNA + S-adenosyl-L-methionine = N(7)-methylguanosine(527) in 16S rRNA + S-adenosyl-L-homocysteine. Its function is as follows. Specifically methylates the N7 position of guanine in position 527 of 16S rRNA. The chain is Ribosomal RNA small subunit methyltransferase G from Pseudomonas syringae pv. tomato (strain ATCC BAA-871 / DC3000).